The chain runs to 427 residues: 3-phosphoshikimate 1-carboxyvinyltransferase (427 aa).

The 3-phosphoshikimate site is built by K22, S23, and R27. A phosphoenolpyruvate-binding site is contributed by K22. Phosphoenolpyruvate is bound by residues G96 and R124. Positions 170, 171, 172, 198, 313, 336, and 340 each coordinate 3-phosphoshikimate. Q172 contacts phosphoenolpyruvate. D313 (proton acceptor) is an active-site residue. Residues R344, R386, and K411 each coordinate phosphoenolpyruvate.

This sequence belongs to the EPSP synthase family. In terms of assembly, monomer.

The protein resides in the cytoplasm. It carries out the reaction 3-phosphoshikimate + phosphoenolpyruvate = 5-O-(1-carboxyvinyl)-3-phosphoshikimate + phosphate. It participates in metabolic intermediate biosynthesis; chorismate biosynthesis; chorismate from D-erythrose 4-phosphate and phosphoenolpyruvate: step 6/7. Catalyzes the transfer of the enolpyruvyl moiety of phosphoenolpyruvate (PEP) to the 5-hydroxyl of shikimate-3-phosphate (S3P) to produce enolpyruvyl shikimate-3-phosphate and inorganic phosphate. This Aeromonas salmonicida (strain A449) protein is 3-phosphoshikimate 1-carboxyvinyltransferase.